The following is a 493-amino-acid chain: Alpha-amylase-related protein (493 aa).

The first 19 residues, 1–19 (MFKFALTLTLCLAGSLSLA), serve as a signal peptide directing secretion. Gln-20 is subject to Pyrrolidone carboxylic acid. Cys-47 and Cys-103 form a disulfide bridge. Residues Asn-117, Gln-168, and Asp-177 each contribute to the Ca(2+) site. A disulfide bridge connects residues Cys-156 and Cys-170. Arg-205 is a binding site for chloride. Asp-207 acts as the Nucleophile in catalysis. His-211 lines the Ca(2+) pocket. The active-site Proton donor is Glu-244. 2 residues coordinate chloride: Asn-307 and Arg-342. 3 disulfides stabilise this stretch: Cys-375–Cys-381, Cys-417–Cys-440, and Cys-447–Cys-459.

It belongs to the glycosyl hydrolase 13 family. As to quaternary structure, monomer. It depends on Ca(2+) as a cofactor. Requires chloride as cofactor. Midgut and fat body.

It is found in the secreted. It carries out the reaction Endohydrolysis of (1-&gt;4)-alpha-D-glucosidic linkages in polysaccharides containing three or more (1-&gt;4)-alpha-linked D-glucose units.. The polypeptide is Alpha-amylase-related protein (Amyrel) (Drosophila melanogaster (Fruit fly)).